Here is a 291-residue protein sequence, read N- to C-terminus: 11-beta-hydroxysteroid dehydrogenase 1 (291 aa).

Residues 1–7 (MAFMKTH) are Cytoplasmic-facing. Residues 8–24 (LLPILGLFMAYYYYSAY) form a helical; Signal-anchor for type II membrane protein membrane-spanning segment. Topologically, residues 25–291 (EEFRPEMLQG…TSYSTDGLIN (267 aa)) are lumenal. NADP(+) contacts are provided by residues 41–67 (GASK…TARS), 92–93 (TM), and 119–121 (NHI). N-linked (GlcNAc...) asparagine glycans are attached at residues asparagine 123 and asparagine 162. Residue serine 170 participates in substrate binding. The Proton acceptor role is filled by tyrosine 183. 183-187 (YSASK) is a binding site for NADP(+). A glycan (N-linked (GlcNAc...) asparagine) is linked at asparagine 207. 218–222 (IDTDT) lines the NADP(+) pocket.

The protein belongs to the short-chain dehydrogenases/reductases (SDR) family. As to quaternary structure, homodimer. As to expression, abundantly expressed in the liver, followed by fibroblasts, also detected in the brain, lung, heart, and ovary, and in smaller amounts in kidney, skin, and spleen.

The protein localises to the endoplasmic reticulum membrane. It catalyses the reaction an 11beta-hydroxysteroid + NADP(+) = an 11-oxosteroid + NADPH + H(+). The enzyme catalyses cortisone + NADPH + H(+) = cortisol + NADP(+). It carries out the reaction corticosterone + NADP(+) = 11-dehydrocorticosterone + NADPH + H(+). The catalysed reaction is a 7beta-hydroxysteroid + NADP(+) = a 7-oxosteroid + NADPH + H(+). It catalyses the reaction 7-oxocholesterol + NADPH + H(+) = 7beta-hydroxycholesterol + NADP(+). The enzyme catalyses chenodeoxycholate + NADP(+) = 7-oxolithocholate + NADPH + H(+). It carries out the reaction 7-oxolithocholate + NADPH + H(+) = ursodeoxycholate + NADP(+). The catalysed reaction is glycochenodeoxycholate + NADP(+) = 7-oxoglycolithocholate + NADPH + H(+). It catalyses the reaction taurochenodeoxycholate + NADP(+) = 7-oxotaurolithocholate + NADPH + H(+). The enzyme catalyses tauroursodeoxycholate + NADP(+) = 7-oxotaurolithocholate + NADPH + H(+). It carries out the reaction glycoursodeoxycholate + NADP(+) = 7-oxoglycolithocholate + NADPH + H(+). The catalysed reaction is 7-oxopregnenolone + NADPH + H(+) = 7beta-hydroxypregnenolone + NADP(+). It catalyses the reaction 3beta,7alpha-dihydroxyandrost-5-en-17-one + NADP(+) = 3beta-hydroxy-5-androstene-7,17-dione + NADPH + H(+). The enzyme catalyses 3beta-hydroxy-5-androstene-7,17-dione + NADPH + H(+) = 3beta,7beta-dihydroxyandrost-5-en-17-one + NADP(+). It carries out the reaction 3beta-hydroxy-5alpha-androstane-7,17-dione + NADPH + H(+) = 3beta,7beta-dihydroxy-5alpha-androstan-17-one + NADP(+). It participates in steroid metabolism. In terms of biological role, controls the reversible conversion of biologically active glucocorticoids such as cortisone to cortisol, and 11-dehydrocorticosterone to corticosterone in the presence of NADP(H). Participates in the corticosteroid receptor-mediated anti-inflammatory response, as well as metabolic and homeostatic processes. Bidirectional in vitro, predominantly functions as a reductase in vivo, thereby increasing the concentration of active glucocorticoids. It has broad substrate specificity, besides glucocorticoids, it accepts other steroid and sterol substrates. Interconverts 7-oxo- and 7-hydroxy-neurosteroids such as 7-oxopregnenolone and 7beta-hydroxypregnenolone, 7-oxodehydroepiandrosterone (3beta-hydroxy-5-androstene-7,17-dione) and 7beta-hydroxydehydroepiandrosterone (3beta,7beta-dihydroxyandrost-5-en-17-one), among others. Catalyzes the stereo-specific conversion of the major dietary oxysterol, 7-ketocholesterol (7-oxocholesterol), into the more polar 7-beta-hydroxycholesterol metabolite. 7-oxocholesterol is one of the most important oxysterols, it participates in several events such as induction of apoptosis, accumulation in atherosclerotic lesions, lipid peroxidation, and induction of foam cell formation. Mediates the 7-oxo reduction of 7-oxolithocholate mainly to chenodeoxycholate, and to a lesser extent to ursodeoxycholate, both in its free form and when conjugated to glycine or taurine, providing a link between glucocorticoid activation and bile acid metabolism. Catalyzes the synthesis of 7-beta-25-dihydroxycholesterol from 7-oxo-25-hydroxycholesterol in vitro, which acts as a ligand for the G-protein-coupled receptor (GPCR) Epstein-Barr virus-induced gene 2 (EBI2) and may thereby regulate immune cell migration. The sequence is that of 11-beta-hydroxysteroid dehydrogenase 1 (HSD11B1) from Saimiri sciureus (Common squirrel monkey).